A 136-amino-acid chain; its full sequence is Ig heavy chain V region BCL1 (136 aa).

Residues 1-19 (MGWSCIIFFLVATATGVHS) form the signal peptide. In terms of domain architecture, Ig-like spans 20–135 (QVQLQQSGPE…WGQGTTLTVS (116 aa)).

This Mus musculus (Mouse) protein is Ig heavy chain V region BCL1.